A 339-amino-acid chain; its full sequence is 5-dehydro-2-deoxygluconokinase (339 aa).

It belongs to the carbohydrate kinase PfkB family.

It carries out the reaction 5-dehydro-2-deoxy-D-gluconate + ATP = 6-phospho-5-dehydro-2-deoxy-D-gluconate + ADP + H(+). The protein operates within polyol metabolism; myo-inositol degradation into acetyl-CoA; acetyl-CoA from myo-inositol: step 5/7. Its function is as follows. Catalyzes the phosphorylation of 5-dehydro-2-deoxy-D-gluconate (2-deoxy-5-keto-D-gluconate or DKG) to 6-phospho-5-dehydro-2-deoxy-D-gluconate (DKGP). This is 5-dehydro-2-deoxygluconokinase from Clostridium tetani (strain Massachusetts / E88).